Consider the following 120-residue polypeptide: Large ribosomal subunit protein uL18 (120 aa).

Belongs to the universal ribosomal protein uL18 family. Part of the 50S ribosomal subunit; part of the 5S rRNA/L5/L18/L25 subcomplex. Contacts the 5S and 23S rRNAs.

Its function is as follows. This is one of the proteins that bind and probably mediate the attachment of the 5S RNA into the large ribosomal subunit, where it forms part of the central protuberance. The chain is Large ribosomal subunit protein uL18 from Bacillus cereus (strain ATCC 10987 / NRS 248).